The sequence spans 512 residues: uncharacterized protein (512 aa).

A signal peptide spans 1–22 (MVSSLIYSLCAVSGLLATTVNG). N-linked (GlcNAc...) asparagine glycosylation is present at asparagine 167. A disordered region spans residues 251 to 282 (SAASPPIYEPDRQTDPEDPETGRNNNQGFEGL).

Its subcellular location is the secreted. This is an uncharacterized protein from Arthroderma benhamiae (strain ATCC MYA-4681 / CBS 112371) (Trichophyton mentagrophytes).